Here is a 419-residue protein sequence, read N- to C-terminus: MTKPRLFRLWLVLGSALMILLIIVYWDNVGTAHFYLHTSLSRPHILEPLPTQGLVEENVFTSDVDEFLDTLLSSDAKHNDLSRRKTEQPPVPAPSKPVLSHMEENVRGYDWSTHDAHQNPDRDRQQAERRSLLRDFCANASLAFPTKDRSFDDIPNYELNHLIVDDRHGVIYCYVPKVACTNWKRVMIVLSESLLDRGSPYRDPLDIPREHVHNTSTHLTFNKFWRRYGKFSRHLMKVKLKKYTKFLFVRDPFVRLISAFRSKFELENEEFYRKFAVPMLRLYANHTSLPASVSEAFSAGLKVSFANFIQYLLDPHTEKLAPFNEHWRQVYRLCHPCQIDYDFVGKLETLDEDAAQLLRFLKVDSQLHFPPSYRNRTASSWEEDWFANIPLAWRQQLYKLYEADFVLFGYPKPENLLRD.

Residues 1–5 (MTKPR) are Cytoplasmic-facing. A helical; Signal-anchor for type II membrane protein membrane pass occupies residues 6 to 26 (LFRLWLVLGSALMILLIIVYW). Over 27-419 (DNVGTAHFYL…YPKPENLLRD (393 aa)) the chain is Lumenal. Over residues 78-87 (HNDLSRRKTE) the composition is skewed to basic and acidic residues. The tract at residues 78–99 (HNDLSRRKTEQPPVPAPSKPVL) is disordered. Asparagine 139 is a glycosylation site (N-linked (GlcNAc...) asparagine). 3'-phosphoadenylyl sulfate is bound at residue 176-182 (PKVACTN). N-linked (GlcNAc...) asparagine glycosylation is present at asparagine 214. 250–258 (RDPFVRLIS) contributes to the 3'-phosphoadenylyl sulfate binding site. Residues asparagine 285 and asparagine 375 are each glycosylated (N-linked (GlcNAc...) asparagine).

This sequence belongs to the sulfotransferase 2 family.

The protein resides in the golgi apparatus membrane. It carries out the reaction chondroitin beta-D-glucuronate + n 3'-phosphoadenylyl sulfate = chondroitin 4'-sulfate + n adenosine 3',5'-bisphosphate + n H(+). In terms of biological role, catalyzes the transfer of sulfate to position 4 of the N-acetylgalactosamine (GalNAc) residue of chondroitin and desulfated dermatan sulfate. Chondroitin sulfate constitutes the predominant proteoglycan present in cartilage and is distributed on the surfaces of many cells and extracellular matrices. Activity toward partially desulfated dermatan sulfate is however lower. Does not form 4, 6-di-O-sulfated GalNAc when chondroitin sulfate C is used as an acceptor. The protein is Carbohydrate sulfotransferase 12 (Chst12) of Mus musculus (Mouse).